The following is a 1047-amino-acid chain: Exportin-6 (1047 aa).

The Importin N-terminal domain maps to 32-98; the sequence is IDTILNNYKA…KGLLLDIYLN (67 aa).

The protein belongs to the exportin family.

Its subcellular location is the nucleus. The protein localises to the cytoplasm. In terms of biological role, probably mediates the nuclear export of actin and profilin-actin complexes. The sequence is that of Exportin-6 (xpo6) from Dictyostelium discoideum (Social amoeba).